Here is a 209-residue protein sequence, read N- to C-terminus: Large ribosomal subunit protein uL3 (209 aa).

The disordered stretch occupies residues 127 to 147 (YSRGPMGHGSKSHRVAGARSA).

Belongs to the universal ribosomal protein uL3 family. As to quaternary structure, part of the 50S ribosomal subunit. Forms a cluster with proteins L14 and L19.

Its function is as follows. One of the primary rRNA binding proteins, it binds directly near the 3'-end of the 23S rRNA, where it nucleates assembly of the 50S subunit. The polypeptide is Large ribosomal subunit protein uL3 (Finegoldia magna (strain ATCC 29328 / DSM 20472 / WAL 2508) (Peptostreptococcus magnus)).